The following is a 129-amino-acid chain: Small ribosomal subunit protein uS12 (129 aa).

Disordered stretches follow at residues 1 to 25 (MPTYNQLVRFGRKSKTRKTKSPALE) and 110 to 129 (RKQGRSRYGAPRKQVAVTKK). Residues 10-20 (FGRKSKTRKTK) show a composition bias toward basic residues.

Belongs to the universal ribosomal protein uS12 family. In terms of assembly, part of the 30S ribosomal subunit. Contacts proteins S8 and S17. May interact with IF1 in the 30S initiation complex.

Its function is as follows. With S4 and S5 plays an important role in translational accuracy. Functionally, interacts with and stabilizes bases of the 16S rRNA that are involved in tRNA selection in the A site and with the mRNA backbone. Located at the interface of the 30S and 50S subunits, it traverses the body of the 30S subunit contacting proteins on the other side and probably holding the rRNA structure together. The combined cluster of proteins S8, S12 and S17 appears to hold together the shoulder and platform of the 30S subunit. This chain is Small ribosomal subunit protein uS12, found in Rickettsia conorii (strain ATCC VR-613 / Malish 7).